Reading from the N-terminus, the 158-residue chain is Glycosyl-phosphatidylinositol-anchored molecule-like protein (158 aa).

The first 17 residues, 1–17 (MLLFALLLAMELPLVAA), serve as a signal peptide directing secretion. The region spanning 29–134 (LRCHDCAVIN…DEVTEEELPE (106 aa)) is the UPAR/Ly6 domain. 5 cysteine pairs are disulfide-bonded: cysteine 31-cysteine 55, cysteine 34-cysteine 42, cysteine 48-cysteine 73, cysteine 77-cysteine 104, and cysteine 105-cysteine 110.

It localises to the cell membrane. Its function is as follows. May play a role in the apoptotic pathway or cell-cycle regulation induced by p53/TP53 after DNA damage. The chain is Glycosyl-phosphatidylinositol-anchored molecule-like protein (GML) from Homo sapiens (Human).